Reading from the N-terminus, the 310-residue chain is Methionyl-tRNA formyltransferase (310 aa).

Ser110–Pro113 is a binding site for (6S)-5,6,7,8-tetrahydrofolate.

The protein belongs to the Fmt family.

It carries out the reaction L-methionyl-tRNA(fMet) + (6R)-10-formyltetrahydrofolate = N-formyl-L-methionyl-tRNA(fMet) + (6S)-5,6,7,8-tetrahydrofolate + H(+). Functionally, attaches a formyl group to the free amino group of methionyl-tRNA(fMet). The formyl group appears to play a dual role in the initiator identity of N-formylmethionyl-tRNA by promoting its recognition by IF2 and preventing the misappropriation of this tRNA by the elongation apparatus. The chain is Methionyl-tRNA formyltransferase from Clostridium tetani (strain Massachusetts / E88).